A 686-amino-acid polypeptide reads, in one-letter code: DNA ligase (686 aa).

NAD(+) contacts are provided by residues 31–35, 80–81, and E109; these read DSEYD and SL. K111 (N6-AMP-lysine intermediate) is an active-site residue. NAD(+)-binding residues include R132, E166, K280, and K304. 4 residues coordinate Zn(2+): C430, C433, C448, and C453. A BRCT domain is found at 611 to 686; that stretch reads NVEGILSGKT…IWSEQDLLDL (76 aa).

This sequence belongs to the NAD-dependent DNA ligase family. LigA subfamily. Requires Mg(2+) as cofactor. Mn(2+) serves as cofactor.

The catalysed reaction is NAD(+) + (deoxyribonucleotide)n-3'-hydroxyl + 5'-phospho-(deoxyribonucleotide)m = (deoxyribonucleotide)n+m + AMP + beta-nicotinamide D-nucleotide.. Its function is as follows. DNA ligase that catalyzes the formation of phosphodiester linkages between 5'-phosphoryl and 3'-hydroxyl groups in double-stranded DNA using NAD as a coenzyme and as the energy source for the reaction. It is essential for DNA replication and repair of damaged DNA. The polypeptide is DNA ligase (Lactococcus lactis subsp. cremoris (strain SK11)).